The primary structure comprises 505 residues: Lysine--tRNA ligase (505 aa).

The Mg(2+) site is built by E415 and E422.

It belongs to the class-II aminoacyl-tRNA synthetase family. In terms of assembly, homodimer. Requires Mg(2+) as cofactor.

Its subcellular location is the cytoplasm. The catalysed reaction is tRNA(Lys) + L-lysine + ATP = L-lysyl-tRNA(Lys) + AMP + diphosphate. This is Lysine--tRNA ligase from Xanthomonas campestris pv. campestris (strain 8004).